A 213-amino-acid chain; its full sequence is Thymidylate kinase (213 aa).

Position 9–16 (9–16 (GLEGAGKS)) interacts with ATP.

Belongs to the thymidylate kinase family.

The catalysed reaction is dTMP + ATP = dTDP + ADP. Its function is as follows. Phosphorylation of dTMP to form dTDP in both de novo and salvage pathways of dTTP synthesis. The sequence is that of Thymidylate kinase from Aeromonas hydrophila subsp. hydrophila (strain ATCC 7966 / DSM 30187 / BCRC 13018 / CCUG 14551 / JCM 1027 / KCTC 2358 / NCIMB 9240 / NCTC 8049).